The primary structure comprises 914 residues: Serine/threonine kinase SAD-1 (914 aa).

The 252-residue stretch at 47-298 (YKLEKTLGKG…LADVFKHPWV (252 aa)) folds into the Protein kinase domain. Residues 53 to 61 (LGKGQTGLV) and K76 each bind ATP. The active-site Proton acceptor is D169. Disordered stretches follow at residues 375–551 (AQED…SPPS), 563–590 (TMNS…SGPW), and 757–914 (NSTQ…ADKV). The segment covering 393 to 402 (PPKKRTDSSR) has biased composition (basic and acidic residues). Low complexity predominate over residues 444–462 (RSSTRDLFGSSSSGSYSAR). Positions 473–482 (ASRSTNSYHY) are enriched in polar residues. Residues 495 to 526 (AARHVRDAQERRESRDSGRGSSRKESKDRSDK) are compositionally biased toward basic and acidic residues. 2 stretches are compositionally biased toward low complexity: residues 527 to 551 (SASS…SPPS) and 563 to 573 (TMNSTNSSTNS). The segment covering 574–590 (LIAGNSQTSIGSTSGPW) has biased composition (polar residues). Over residues 780–796 (DSSVGSACSDSESNASS) the composition is skewed to low complexity. Residues 823 to 837 (SMRSVGSGTANSYKS) are compositionally biased toward polar residues. The segment covering 850–876 (ASSSSASNRYGPSSSSSGSYSNNADYS) has biased composition (low complexity). Over residues 882 to 903 (SQRSNGSSAPKNQYSPGSQRSF) the composition is skewed to polar residues.

This sequence belongs to the protein kinase superfamily. CAMK Ser/Thr protein kinase family. SNF1 subfamily. Interacts with strd-1 and nab-1. Mg(2+) is required as a cofactor. As to expression, expressed in neurons. Colocalizes with strd-1 along the dorsal nerve cord.

Its subcellular location is the synapse. The enzyme catalyses L-seryl-[protein] + ATP = O-phospho-L-seryl-[protein] + ADP + H(+). It carries out the reaction L-threonyl-[protein] + ATP = O-phospho-L-threonyl-[protein] + ADP + H(+). In terms of biological role, regulates both neuronal polarity and synaptic organization when bound to strd-1. Kinase activity is required for the establishment, but not the maintenance, of both processes. Binding to nab-1 is essential for role in restricting axonal fate during neuronal polarization but is not required for regulating synapse morphology. The chain is Serine/threonine kinase SAD-1 from Caenorhabditis elegans.